Here is a 235-residue protein sequence, read N- to C-terminus: Acyl-protein thioesterase 1 (235 aa).

Active-site charge relay system residues include Ser-119, Asp-172, and His-206.

This sequence belongs to the AB hydrolase superfamily. AB hydrolase 2 family.

It localises to the cytoplasm. The protein localises to the nucleus. It catalyses the reaction S-hexadecanoyl-L-cysteinyl-[protein] + H2O = L-cysteinyl-[protein] + hexadecanoate + H(+). Its function is as follows. Hydrolyzes fatty acids from S-acylated cysteine residues in proteins with a strong preference for palmitoylated G-alpha proteins over other acyl substrates. Mediates the deacylation of G-alpha proteins such as GPA1 in vivo, but has weak or no activity toward palmitoylated Ras proteins. Has weak lysophospholipase activity in vitro; however such activity may not exist in vivo. This is Acyl-protein thioesterase 1 from Eremothecium gossypii (strain ATCC 10895 / CBS 109.51 / FGSC 9923 / NRRL Y-1056) (Yeast).